Consider the following 76-residue polypeptide: uncharacterized protein (76 aa).

The chain crosses the membrane as a helical span at residues 24–44; that stretch reads GAIFLVCYPLYCVVCFVSVLC.

It is found in the membrane. This is an uncharacterized protein from Schizosaccharomyces pombe (strain 972 / ATCC 24843) (Fission yeast).